The following is a 294-amino-acid chain: Lysozyme M1 (294 aa).

One can recognise a Ch-type lysozyme domain in the interval 81–294 (GVQGIDVSHW…RLLALANNTA (214 aa)). Active-site residues include D86, D175, and E177. A disulfide bond links C185 and C224.

The protein belongs to the glycosyl hydrolase 25 family.

It localises to the secreted. The catalysed reaction is Hydrolysis of (1-&gt;4)-beta-linkages between N-acetylmuramic acid and N-acetyl-D-glucosamine residues in a peptidoglycan and between N-acetyl-D-glucosamine residues in chitodextrins.. Its function is as follows. This enzyme has both lysozyme (acetylmuramidase) and diacetylmuramidase activities. This is Lysozyme M1 (acm) from Streptomyces globisporus.